The chain runs to 462 residues: Steroidogenic factor 1 (462 aa).

A DNA-binding region (nuclear receptor) is located at residues 10 to 85; sequence DELCPVCGDK…VGMRLEAVRA (76 aa). An NR C4-type zinc finger spans residues 13-33; the sequence is CPVCGDKVSGYHYGLLTCESC. An N6-acetyllysine mark is found at K34, K38, and K72. The NR C4-type zinc-finger motif lies at 49–73; the sequence is CTESQSCKIDKTQRKRCPFCRFQKC. Residues 117–149 form a disordered region; the sequence is GFKLETGPPMGVPPPPPPPPDYMLPPSLHAPEP. K119 is covalently cross-linked (Glycyl lysine isopeptide (Lys-Gly) (interchain with G-Cter in SUMO)). The span at 126–139 shows a compositional bias: pro residues; sequence MGVPPPPPPPPDYM. K194 participates in a covalent cross-link: Glycyl lysine isopeptide (Lys-Gly) (interchain with G-Cter in SUMO). S203 is modified (phosphoserine; by CDK7). The region spanning 223–460 is the NR LBD domain; it reads NVPELILQLL…NLLIEMLQAK (238 aa). The a 1,2-diacyl-sn-glycero-3-phosphocholine site is built by G342, Y437, and K441.

This sequence belongs to the nuclear hormone receptor family. NR5 subfamily. In terms of assembly, binds DNA as a monomer. Part of a complex consisting of SFPQ, NONO and NR5A1. Interacts with NR0B2, NCOA2 and PPARGC1A. Interacts with DGKQ and CDK7. Binds to and activated by HIPK3. In terms of processing, acetylation stimulates the transcriptional activity. Post-translationally, sumoylation reduces CDK7-mediated phosphorylation on Ser-203. Phosphorylated on Ser-203 by CDK7. This phosphorylation promotes transcriptional activity.

It is found in the nucleus. Functionally, transcriptional activator. Seems to be essential for sexual differentiation and formation of the primary steroidogenic tissues. Binds to the Ad4 site found in the promoter region of steroidogenic P450 genes such as CYP11A, CYP11B and CYP21B. Also regulates the AMH/Muellerian inhibiting substance gene as well as the AHCH and STAR genes. 5'-YCAAGGYC-3' and 5'-RRAGGTCA-3' are the consensus sequences for the recognition by NR5A1. The SFPQ-NONO-NR5A1 complex binds to the CYP17 promoter and regulates basal and cAMP-dependent transcriptional activity. Binds phosphatidylcholine and phospholipids with a phosphatidylinositol (PI) headgroup, in particular PI(3,4)P2 and PI(3,4,5)P3. Activated by the phosphorylation of NR5A1 by HIPK3 leading to increased steroidogenic gene expression upon cAMP signaling pathway stimulation. In Rattus norvegicus (Rat), this protein is Steroidogenic factor 1 (Nr5a1).